Here is a 509-residue protein sequence, read N- to C-terminus: FAD-linked oxidoreductase anuG (509 aa).

Residues 1-21 (MVQISNVWGFGLAIMASLAAA) form the signal peptide. The FAD-binding PCMH-type domain occupies 75-246 (YAAPKFTVVV…TSFEMSIYPT (172 aa)).

Belongs to the oxygen-dependent FAD-linked oxidoreductase family. The cofactor is FAD.

The catalysed reaction is (2S,9S)-annullatin H + 2 A = (2S,9S)-annullatin D + 2 AH2. It functions in the pathway secondary metabolite biosynthesis. Cytochrome P450 monooxygenase; part of the gene cluster that mediates the biosynthesis of annullatin D, an alkylated aromatic polyketide with a fused dihydrobenzofuran lactone ring system that exhibits potent agonistic activities toward the cannabinoid receptors. Within the pathway, anuG is responsible for the five-member lactone ring formation in (2S, 9S)-annullatin D via oxidative lactonization between the two hydroxyl groups. The annullatin backbone 2-hydroxymethyl-3-pentylphenol is assembled from one acetyl-CoA starter unit and 5 malonyl-CoA elongation units by cooperation of the highly reducing polyketide synthase anuA, the short-chain dehydrogenase anuB and the oxidoreductase anuC, before being hydroxylated at the C-5 alkyl chain by the cytochrome P450 monooxygenase anuE to form (8S)-annullatin E. The prenyltransferase anuH subsequently installs one isoprenyl group at the benzene ring to form (8S)-annullatin J. Enzymatic or nonenzymatic dihydro-benzofuran ring formation between the prenyl and the phenolic hydroxyl groups in (8S)-annullatin J results in two diastereomers (2S,9S)-annullatin H and compound 12. The intermediate (2S,9S)-annullatin H is then converted to (2S,9S)-annullatin D by the FAD-linked oxidoreductase anuG-catalyzed five-member lactone ring formation. The isomer 12 acts as a substrate for the short-chain dehydrogenase anuF and is oxidized to (2R)-annullatin F, which is subsequently acetylated by an acetyltransferase leading to (2R)-annullatin G formation. The remaining enzymes identified within the cluster, anuD, anuI and anuJ, seem not to be involved in annullatin biosynthesis. The protein is FAD-linked oxidoreductase anuG of Penicillium roqueforti (strain FM164).